We begin with the raw amino-acid sequence, 186 residues long: UPF0157 protein SCO7215 (186 aa).

It belongs to the UPF0157 (GrpB) family.

This Streptomyces coelicolor (strain ATCC BAA-471 / A3(2) / M145) protein is UPF0157 protein SCO7215.